The primary structure comprises 612 residues: Vitamin B12 transporter BtuB (612 aa).

Residues 1 to 20 (MIKKSLLCTALSVTAFSGWA) form the signal peptide. The TonB box signature appears at 26–33 (DTLVVTAN). In terms of domain architecture, TBDR plug spans 38–152 (PRSAVLAPIT…IGGVVNIITT (115 aa)). Cyanocob(III)alamin is bound by residues Ser-85, Asn-92, and 110–111 (VS). Residues 155 to 612 (KPGTELTAGV…EYTLSGSYTF (458 aa)) enclose the TBDR beta-barrel domain. The next 3 beta stranded transmembrane spans lie at 158-165 (TELTAGVG), 169-178 (YQNYDVSTQQ), and 184-195 (TRVTLMGDYAYT). Ca(2+) is bound by residues Asp-199, Gln-211, Asp-213, and Asp-215. 2 beta stranded membrane passes run 217–227 (FLSKTLYGALE) and 232–248 (DTWS…NRTN). Ca(2+) contacts are provided by Tyr-249, Asp-250, and Asp-261. Transmembrane regions (beta stranded) follow at residues 263-277 (RKLY…LRFN), 279-296 (ELIQ…KDYN), 309-325 (TLDE…NSIV), 328-337 (HGNVGAGVDW), 353-369 (YDQR…QQLG), 371-381 (FTFEGAARSDD), 385-400 (FGRH…WEFI), 403-417 (YRFI…KAPN), 434-443 (QSKQWEGAFE), 449-458 (VNWRVSGYRN), 473-490 (YFNE…TANF), 494-509 (PLAH…SRNA), 517-529 (RRSK…QLDW), and 535-550 (DWGL…YDTD). Thr-309 contacts cyanocob(III)alamin. Arg-517 contacts cyanocob(III)alamin. Tyr-551 is a cyanocob(III)alamin binding site. 3 beta stranded membrane passes run 556 to 570 (PVKM…LAVS), 583 to 594 (IANRFDKDYETV), and 600 to 612 (AGRE…SYTF). The TonB C-terminal box signature appears at 595–612 (YGYATAGREYTLSGSYTF).

This sequence belongs to the TonB-dependent receptor family. BtuB (TC 1.B.14.3.1) subfamily.

Its subcellular location is the cell outer membrane. Functionally, involved in the active translocation of vitamin B12 (cyanocobalamin) across the outer membrane to the periplasmic space. It derives its energy for transport by interacting with the trans-periplasmic membrane protein TonB. The polypeptide is Vitamin B12 transporter BtuB (Citrobacter freundii).